Consider the following 736-residue polypeptide: Catalase-peroxidase 2 (736 aa).

Residues 1-23 (MIKKTLPVLILLALSGSFSTAVA) form the signal peptide. The tryptophyl-tyrosyl-methioninium (Trp-Tyr) (with M-249) cross-link spans 102–223 (WHGAGTYRTY…LAATQMGLIY (122 aa)). The active-site Proton acceptor is His-103. The segment at residues 223–249 (YVNPEGPGGKPDPLASAKDIREAFSRM) is a cross-link (tryptophyl-tyrosyl-methioninium (Tyr-Met) (with W-102)). His-264 provides a ligand contact to heme b.

This sequence belongs to the peroxidase family. Peroxidase/catalase subfamily. In terms of assembly, homodimer or homotetramer. It depends on heme b as a cofactor. Formation of the three residue Trp-Tyr-Met cross-link is important for the catalase, but not the peroxidase activity of the enzyme.

Its subcellular location is the periplasm. It catalyses the reaction H2O2 + AH2 = A + 2 H2O. The enzyme catalyses 2 H2O2 = O2 + 2 H2O. Functionally, bifunctional enzyme with both catalase and broad-spectrum peroxidase activity. This is Catalase-peroxidase 2 from Escherichia coli O157:H7.